The following is a 724-amino-acid chain: Pre-mRNA-splicing factor CLF1 (724 aa).

HAT repeat units follow at residues 55-87 (EFQARKRTEFESRIRYSRDSILAWTKYAQWEAS), 89-121 (NEYERSRSVFERALDVDPRSVDLWIKYTDMELK), 123-155 (RNINHARNLFDRAITLLPRVDALWYKYVYLEEL), 157-188 (LNVSGARQIFERWMQWEPNDKAWQSYIKLEER), 190-221 (NELDRASAIYERWIACRPIPKNWVAWAKFEED), 223-262 (GQPDKAREVFQTALEFFGDEEEQVEKAQSVFAAFARMETR), 264-298 (KEFERARVIYKFALARLPRSKSASLYAQYTKFEKQ), 308-340 (TVLGKRRIQYEEELAYDPTNYDAWFSLARLEED), 352-386 (VEPMRVREVYERAVANVPPALEKRYWRRYIYLWLQ), 396-432 (KDYDRARDVYKAAVKLVPHKTFTFAKLWLAYAYFEIR), 434-465 (LDVSAARKVLGAGIGMCPKPKLFTGYIELEMR), 467-499 (REFDRVRTLYEKFLTYDPSLSSAWIQWTQVESA), 501-534 (EDFERVRAIFELAVQQSLDMPEIVWKAYIDFEAG), 536-567 (GERERARNLYERLLERTSHVKVWISYALMEIA), 585-626 (GDAD…EHGD), and 635-667 (DMLPTTRKRWRKAEDGSGELEEYWDLVFPDDEK). Residues 681–724 (QAWAQQRAGQGEEGGLSYDLPSDSESENEDEDGDNREEEGMDQD) form a disordered region. Residues 702–724 (SDSESENEDEDGDNREEEGMDQD) are compositionally biased toward acidic residues.

Belongs to the crooked-neck family. As to quaternary structure, associated with the spliceosome.

Its subcellular location is the nucleus. Involved in pre-mRNA splicing and cell cycle progression. Required for the spliceosome assembly and initiation of the DNA replication. This Cryptococcus neoformans var. grubii serotype A (strain H99 / ATCC 208821 / CBS 10515 / FGSC 9487) (Filobasidiella neoformans var. grubii) protein is Pre-mRNA-splicing factor CLF1 (CLF1).